Reading from the N-terminus, the 222-residue chain is Pyridoxal phosphate homeostasis protein (222 aa).

Position 35 is an N6-(pyridoxal phosphate)lysine (Lys35).

Belongs to the pyridoxal phosphate-binding protein YggS/PROSC family.

In terms of biological role, pyridoxal 5'-phosphate (PLP)-binding protein, which is involved in PLP homeostasis. This chain is Pyridoxal phosphate homeostasis protein, found in Helicobacter pylori (strain J99 / ATCC 700824) (Campylobacter pylori J99).